Reading from the N-terminus, the 180-residue chain is Protein SPMIP9 (180 aa).

Microtubule inner protein component of sperm flagellar doublet microtubules. Only detected after the mouse is 35 days old. Expression increases gradually from day 35 to 6 months, and remains stable after 54 days. Exclusively expressed in the epididymis and testis.

Its subcellular location is the nucleus. The protein localises to the cytoplasm. It is found in the cytoskeleton. The protein resides in the flagellum axoneme. Microtubule inner protein (MIP) part of the dynein-decorated doublet microtubules (DMTs) in flagella axoneme. In Mus musculus (Mouse), this protein is Protein SPMIP9 (Spmip9).